Reading from the N-terminus, the 338-residue chain is Ketol-acid reductoisomerase (NADP(+)) (338 aa).

A KARI N-terminal Rossmann domain is found at 1–181; sequence MKVFYDKDAD…GGGRAGIIET (181 aa). NADP(+) is bound by residues 24–27, Arg47, and Ser52; that span reads YGSQ. His107 is an active-site residue. Position 133 (Gly133) interacts with NADP(+). Positions 182–327 constitute a KARI C-terminal knotted domain; it reads NFREETETDL…AKLRAMMPWI (146 aa). The Mg(2+) site is built by Asp190, Glu194, Glu226, and Glu230. Ser251 provides a ligand contact to substrate.

This sequence belongs to the ketol-acid reductoisomerase family. Mg(2+) serves as cofactor.

It catalyses the reaction (2R)-2,3-dihydroxy-3-methylbutanoate + NADP(+) = (2S)-2-acetolactate + NADPH + H(+). The catalysed reaction is (2R,3R)-2,3-dihydroxy-3-methylpentanoate + NADP(+) = (S)-2-ethyl-2-hydroxy-3-oxobutanoate + NADPH + H(+). The protein operates within amino-acid biosynthesis; L-isoleucine biosynthesis; L-isoleucine from 2-oxobutanoate: step 2/4. It functions in the pathway amino-acid biosynthesis; L-valine biosynthesis; L-valine from pyruvate: step 2/4. Involved in the biosynthesis of branched-chain amino acids (BCAA). Catalyzes an alkyl-migration followed by a ketol-acid reduction of (S)-2-acetolactate (S2AL) to yield (R)-2,3-dihydroxy-isovalerate. In the isomerase reaction, S2AL is rearranged via a Mg-dependent methyl migration to produce 3-hydroxy-3-methyl-2-ketobutyrate (HMKB). In the reductase reaction, this 2-ketoacid undergoes a metal-dependent reduction by NADPH to yield (R)-2,3-dihydroxy-isovalerate. This chain is Ketol-acid reductoisomerase (NADP(+)), found in Polynucleobacter necessarius subsp. necessarius (strain STIR1).